The primary structure comprises 174 residues: RxLR effector protein 207 (174 aa).

An N-terminal signal peptide occupies residues 1 to 20 (MSKVFLLLVLSVFALVSCDA). The RxLR-dEER signature appears at 46–62 (RMLRAQEEPTNAADEER). The interval 82–99 (VTNSKLVQSMNNKLASLT) is disordered.

It belongs to the RxLR effector family. As to quaternary structure, interacts with Nicotiana benthamiana ACD11, BPA1 (binding partner of ACD11), as well as BPA-like proteins BPL1, BPL2, BPL3 and BPL4.

It localises to the secreted. Its subcellular location is the host cell membrane. Functionally, secreted effector that activates ROS-mediated cell death in plant host and is essential for virulence. Plays a role in the transition from the biotrophic to necrotrophic stage. Associates with and promotes the degradation of Nicotiana benthamiana BPA1, BPL1, BPL2, and BPL4 to disrupt ACD11 stabilization in a 26S proteasome-dependent manner. The chain is RxLR effector protein 207 from Phytophthora capsici.